The following is a 67-amino-acid chain: Conotoxin ArMLKM-01 (67 aa).

The N-terminal stretch at 1 to 24 is a signal peptide; sequence MLKMEVVLFTFLVLFPLSTLQLET. Positions 25–51 are excised as a propeptide; the sequence is DQPVERYVENKQDLNPDESRNFMLPIV. 3 cysteine pairs are disulfide-bonded: Cys54–Cys65, Cys55–Cys63, and Cys58–Cys66.

It belongs to the conotoxin M superfamily. In terms of tissue distribution, expressed by the venom duct.

Its subcellular location is the secreted. The sequence is that of Conotoxin ArMLKM-01 from Conus arenatus (Sand-dusted cone).